A 441-amino-acid chain; its full sequence is Rho-associated protein kinase 1 (441 aa).

A coiled-coil region spans residues Asn1–Lys99. The SHROOM3 binding stretch occupies residues Glu114–Ser353. The region spanning Thr356–Phe422 is the RhoBD domain. Residues Asn418–Lys441 are a coiled coil.

Belongs to the protein kinase superfamily. AGC Ser/Thr protein kinase family. In terms of assembly, homodimer. Interacts with RHOA (activated by GTP), RHOB, RHOC, GEM, MYLC2B, RHOE, PPP1R12A, LIMK1, LIMK2, TSG101, CHORDC1, DAPK3, PFN1, PTEN and JIP3. Interacts with FHOD1 in a Src-dependent manner. Interacts with ITGB1BP1 (via N-terminus and PTB domain). Interacts with SHROOM3. Requires Mg(2+) as cofactor.

It localises to the cytoplasm. It is found in the golgi apparatus membrane. The protein resides in the cytoskeleton. Its subcellular location is the microtubule organizing center. The protein localises to the centrosome. It localises to the centriole. It is found in the cell projection. The protein resides in the bleb. Its subcellular location is the cell membrane. The protein localises to the lamellipodium. It localises to the ruffle. It carries out the reaction L-seryl-[protein] + ATP = O-phospho-L-seryl-[protein] + ADP + H(+). It catalyses the reaction L-threonyl-[protein] + ATP = O-phospho-L-threonyl-[protein] + ADP + H(+). Activated by RHOA binding. Inhibited by Y-27632. Functionally, protein kinase which is a key regulator of the actin cytoskeleton and cell polarity. Involved in regulation of smooth muscle contraction, actin cytoskeleton organization, stress fiber and focal adhesion formation, neurite retraction, cell adhesion and motility via phosphorylation of DAPK3, GFAP, LIMK1, LIMK2, MYL9/MLC2, TPPP, PFN1 and PPP1R12A. Phosphorylates FHOD1 and acts synergistically with it to promote SRC-dependent non-apoptotic plasma membrane blebbing. Phosphorylates JIP3 and regulates the recruitment of JNK to JIP3 upon UVB-induced stress. Acts as a suppressor of inflammatory cell migration by regulating PTEN phosphorylation and stability. Acts as a negative regulator of VEGF-induced angiogenic endothelial cell activation. Required for centrosome positioning and centrosome-dependent exit from mitosis. Plays a role in terminal erythroid differentiation. Inhibits podocyte motility via regulation of actin cytoskeletal dynamics and phosphorylation of CFL1. Promotes keratinocyte terminal differentiation. Involved in osteoblast compaction through the fibronectin fibrillogenesis cell-mediated matrix assembly process, essential for osteoblast mineralization. May regulate closure of the eyelids and ventral body wall by inducing the assembly of actomyosin bundles. The sequence is that of Rho-associated protein kinase 1 (ROCK1) from Bos taurus (Bovine).